We begin with the raw amino-acid sequence, 77 residues long: MAQKFTILFTILLVVIAAQDVMAQDATLTKLFQQYDPVCHKPCSTQDDCSGGTFCQACWRFAGTCGPYVGRAMAIGV.

The signal sequence occupies residues 1-32; it reads MAQKFTILFTILLVVIAAQDVMAQDATLTKLF. Residue glutamine 33 is modified to Pyrrolidone carboxylic acid. 3 cysteine pairs are disulfide-bonded: cysteine 39–cysteine 55, cysteine 43–cysteine 58, and cysteine 49–cysteine 65. The propeptide at 70–77 is hydrophobic peptide; the sequence is GRAMAIGV.

The protein to potato MCPI. In terms of tissue distribution, ovaries.

May play a defensive role against insect attacks. The protein is Metallocarboxypeptidase inhibitor of Solanum lycopersicum (Tomato).